We begin with the raw amino-acid sequence, 491 residues long: Argininosuccinate lyase (491 aa).

The protein belongs to the lyase 1 family. Argininosuccinate lyase subfamily.

The protein localises to the cytoplasm. The catalysed reaction is 2-(N(omega)-L-arginino)succinate = fumarate + L-arginine. Its pathway is amino-acid biosynthesis; L-arginine biosynthesis; L-arginine from L-ornithine and carbamoyl phosphate: step 3/3. The protein is Argininosuccinate lyase of Methanococcoides burtonii (strain DSM 6242 / NBRC 107633 / OCM 468 / ACE-M).